The following is a 404-amino-acid chain: MKLPIYLDYAATCPVDERVAKKMMAFLTIDGTFGNPASRSHKFGWQAEEAVDIARNQIADLIGADSREIVFTSGATESDNLAIKGAAHFYQTKGKHILTCKTEHKAVLDTCRQLEREGFEVTYLSPEADGLIDLEKFKAALRPDTILASIMHANNEIGVLQDIKAIGELCRANKTIFHVDATQSVGKVEINLEELAVDLMSMSSHKLYGPKGVGALYVRRKPRVRLEAIIHGGGHERGMRSGTLPVHQIVGMGEAYRIAKEEMASEMPRLKALRDRLYNGLKDIEETYVNGSMEHRLDSNLNISFNYVEGESLMMALRDIAVSSGSACTSASLEPSYVLRALGLNDELAHSSIRFTLGRYTTEEEIDYTINLMKGAVEKLRALSPLWDMFKEGIDLNTIEWSAH.

Pyridoxal 5'-phosphate-binding positions include 75–76 (AT), Asn155, Gln183, and 203–205 (SSH). An N6-(pyridoxal phosphate)lysine modification is found at Lys206. Thr243 contacts pyridoxal 5'-phosphate. Residue Cys328 is the Cysteine persulfide intermediate of the active site. Cys328 provides a ligand contact to [2Fe-2S] cluster.

Belongs to the class-V pyridoxal-phosphate-dependent aminotransferase family. NifS/IscS subfamily. Homodimer. Forms a heterotetramer with IscU, interacts with other sulfur acceptors. Pyridoxal 5'-phosphate serves as cofactor.

It localises to the cytoplasm. It catalyses the reaction (sulfur carrier)-H + L-cysteine = (sulfur carrier)-SH + L-alanine. The protein operates within cofactor biosynthesis; iron-sulfur cluster biosynthesis. Its function is as follows. Master enzyme that delivers sulfur to a number of partners involved in Fe-S cluster assembly, tRNA modification or cofactor biosynthesis. Catalyzes the removal of elemental sulfur atoms from cysteine to produce alanine. Functions as a sulfur delivery protein for Fe-S cluster synthesis onto IscU, an Fe-S scaffold assembly protein, as well as other S acceptor proteins. The protein is Cysteine desulfurase IscS of Haemophilus influenzae (strain PittEE).